The primary structure comprises 441 residues: BTB/POZ domain-containing protein At2g24240 (441 aa).

Residues 6–76 enclose the BTB domain; it reads DRIKFNVGGR…LRTGDLNVPA (71 aa).

It participates in protein modification; protein ubiquitination. May act as a substrate-specific adapter of an E3 ubiquitin-protein ligase complex (CUL3-RBX1-BTB) which mediates the ubiquitination and subsequent proteasomal degradation of target proteins. This is BTB/POZ domain-containing protein At2g24240 from Arabidopsis thaliana (Mouse-ear cress).